The chain runs to 507 residues: MMAAAPIQQNGTHTGVPIDLDPPDSRKRPLEAPPEAGSTKRTNTGEDGQYFLKVLIPSYAAGSIIGKGGQTIVQLQKETGATIKLSKSKDFYPGTTERVCLIQGTVEALNAVHGFIAEKIREMPQNVAKTEPVSILQPQTTVNPDRIKQTLPSSPTTTKSSPSDPMTTSRANQVKIIVPNSTAGLIIGKGGATVKAVMEQSGAWVQLSQKPDGINLQERVVTVSGEPEQNRKAVELIIQKIQEDPQSGSCLNISYANVTGPVANSNPTGSPYANTAEVLPTAAAAAGLLGHANLAGVAAFPAVLSGFTGNDLVAITSALNTLASYGYNLNTLGLGLSQAAATGALAAAAASANPAAAAANLLATYASEASASGSTAGGTAGTFALGSLAAATAATNGYFGAASPLAASAILGTEKSTDGSKDVVEIAVPENLVGAILGKGGKTLVEYQELTGARIQISKKGEFVPGTRNRKVTITGTPAATQAAQYLITQRITYEQGVRAANPQKVG.

Residues 1 to 44 (MMAAAPIQQNGTHTGVPIDLDPPDSRKRPLEAPPEAGSTKRTNT) are disordered. The short motif at 27–43 (KRPLEAPPEAGSTKRTN) is the Bipartite nuclear localization signal element. The region spanning 49 to 116 (QYFLKVLIPS…EALNAVHGFI (68 aa)) is the KH 1 domain. The tract at residues 139-171 (QTTVNPDRIKQTLPSSPTTTKSSPSDPMTTSRA) is disordered. The span at 150 to 169 (TLPSSPTTTKSSPSDPMTTS) shows a compositional bias: low complexity. Position 154 is a phosphoserine (Ser-154). KH domains follow at residues 171–237 (ANQV…VELI) and 421–488 (KDVV…QYLI). Residues 419-503 (GSKDVVEIAV…YEQGVRAANP (85 aa)) form a required for RNA binding region.

Interacts with PTBP2; the interaction is direct. In terms of tissue distribution, expressed in cerebellum, brain stem, hippocampus, and frontal cortex.

It is found in the nucleus. Functions to regulate alternative splicing in neurons by binding pre-mRNA in a sequence-specific manner to activate exon inclusion or exclusion. It binds specifically to the sequences 5'-YCAY-3' and regulates splicing in only a subset of regulated exons. Binding to an exonic 5'-YCAY-3' cluster changes the protein complexes assembled on pre-mRNA, blocking U1 snRNP binding and exon inclusion, whereas binding to an intronic 5'-YCAY-3' cluster enhances spliceosome assembly and exon inclusion. Binding to 5'-YCAY-3' clusters results in a local and asymmetric action to regulate spliceosome assembly and alternative splicing in neurons. Binding to an exonic 5'-YCAY-3' cluster changed the protein complexes assembled on pre-mRNA, blocking U1 snRNP (small nuclear ribonucleoprotein) binding and exon inclusion, whereas binding to an intronic 5'-YCAY-3' cluster enhanced spliceosome assembly and exon inclusion. With NOVA1, they perform unique biological functions in different brain areas and cell types. Autoregulates its own expression by acting as a splicing repressor. Acts to activate the inclusion of exon E3A in the glycine receptor alpha-2 chain and of exon E9 in gamma-aminobutyric-acid receptor gamma-2 subunit via a distal downstream UCAU-rich intronic splicing enhancer. Acts to regulate a novel glycine receptor alpha-2 chain splice variant (alpha-2N) in developing spinal cord. This Homo sapiens (Human) protein is RNA-binding protein Nova-1.